The sequence spans 230 residues: Thymidylate kinase (230 aa).

Residue 20–27 (GGEGAGKS) coordinates ATP.

This sequence belongs to the thymidylate kinase family.

The enzyme catalyses dTMP + ATP = dTDP + ADP. Functionally, phosphorylation of dTMP to form dTDP in both de novo and salvage pathways of dTTP synthesis. This chain is Thymidylate kinase, found in Rhodopseudomonas palustris (strain ATCC BAA-98 / CGA009).